Here is a 286-residue protein sequence, read N- to C-terminus: ATP synthase gamma chain (286 aa).

Belongs to the ATPase gamma chain family. As to quaternary structure, F-type ATPases have 2 components, CF(1) - the catalytic core - and CF(0) - the membrane proton channel. CF(1) has five subunits: alpha(3), beta(3), gamma(1), delta(1), epsilon(1). CF(0) has three main subunits: a, b and c.

It is found in the cell inner membrane. Its function is as follows. Produces ATP from ADP in the presence of a proton gradient across the membrane. The gamma chain is believed to be important in regulating ATPase activity and the flow of protons through the CF(0) complex. The polypeptide is ATP synthase gamma chain (Pseudomonas savastanoi pv. phaseolicola (strain 1448A / Race 6) (Pseudomonas syringae pv. phaseolicola (strain 1448A / Race 6))).